A 235-amino-acid chain; its full sequence is Replication protein (235 aa).

Position 149 (tyrosine 149) interacts with DNA.

This sequence belongs to the Gram-positive plasmids replication protein type 1 family.

Produces a single-strand nick in a specific site of the plasmid, and this nick results in single-strand replication by rolling circle mechanism. In Bacillus sp, this protein is Replication protein (repB).